The primary structure comprises 471 residues: MSIQIFNTLKREKEPFKPLKDGEVKMYVCGPTVYNYIHIGNARPIIVFDTVRRYFTYRGYDVKFVSNFTDVDDKLIRAANELKLTVPEVADRFIGAYFDDVDQLNVAKATVNPRVTENMDEIIQLISTLIEKGYAYESAGDVYFRTKKFKDYGKLSGQELSELQHGARVEYNERKQDELDFTLWKAAKPGEIFWESPFGNGRPGWHIECSALAKKYLGDTIDIHAGGQDLVFPHHEDEIAQSEAATGKTFANYWMHNAFLNIDGEKMSKSLGNFITLHDVLKDNDPNVIRFFMLSVHYRKPITLNDAILEDAKNGLERLMIAYQNIDHRIQTDDGEYVEEAHEDEWLEQLTELKQAFEDDMDDDFNTANAITTFHELAKRANIYLAKETVSINVLREFLSMMRLFAEVLGLKLENTQTDSLDDSEVEALIEERLQARNERNFARADEIRDILKEKNIILEDTAQGTRFRRG.

Residue C29 coordinates Zn(2+). A 'HIGH' region motif is present at residues 31–41 (PTVYNYIHIGN). Zn(2+) contacts are provided by C209, H234, and E238. The 'KMSKS' region motif lies at 266 to 270 (KMSKS). K269 contributes to the ATP binding site.

The protein belongs to the class-I aminoacyl-tRNA synthetase family. Monomer. Zn(2+) serves as cofactor.

The protein resides in the cytoplasm. It catalyses the reaction tRNA(Cys) + L-cysteine + ATP = L-cysteinyl-tRNA(Cys) + AMP + diphosphate. This Listeria monocytogenes serotype 4b (strain CLIP80459) protein is Cysteine--tRNA ligase.